The chain runs to 217 residues: Small ribosomal subunit protein uS11m (217 aa).

The transit peptide at 1–59 (MLLQPVWKGCRWTQFVRPIRRWNSTGTNRGVPFSFKDISNQEDITNISYPSSSDSVLTK) directs the protein to the mitochondrion.

The protein belongs to the universal ribosomal protein uS11 family. In terms of assembly, component of the mitochondrial small ribosomal subunit (mt-SSU). Mature yeast 74S mitochondrial ribosomes consist of a small (37S) and a large (54S) subunit. The 37S small subunit contains a 15S ribosomal RNA (15S mt-rRNA) and 34 different proteins. The 54S large subunit contains a 21S rRNA (21S mt-rRNA) and 46 different proteins.

The protein localises to the mitochondrion. In terms of biological role, component of the mitochondrial ribosome (mitoribosome), a dedicated translation machinery responsible for the synthesis of mitochondrial genome-encoded proteins, including at least some of the essential transmembrane subunits of the mitochondrial respiratory chain. The mitoribosomes are attached to the mitochondrial inner membrane and translation products are cotranslationally integrated into the membrane. The chain is Small ribosomal subunit protein uS11m (MRPS18) from Saccharomyces cerevisiae (strain ATCC 204508 / S288c) (Baker's yeast).